The primary structure comprises 420 residues: Exodeoxyribonuclease 7 large subunit (420 aa).

It belongs to the XseA family. As to quaternary structure, heterooligomer composed of large and small subunits.

Its subcellular location is the cytoplasm. It carries out the reaction Exonucleolytic cleavage in either 5'- to 3'- or 3'- to 5'-direction to yield nucleoside 5'-phosphates.. Bidirectionally degrades single-stranded DNA into large acid-insoluble oligonucleotides, which are then degraded further into small acid-soluble oligonucleotides. This is Exodeoxyribonuclease 7 large subunit from Helicobacter pylori (strain Shi470).